The following is a 254-amino-acid chain: MKLNIRAQTAQNQHNNSPIVLVHGLFGSLDNLGVLARDLVNDHNIIQVDMRNHGLSPRDPVMNYPAMAQDLVDTLDAQQIDKATFIGHSMGGKAVMALTALASDRIDKLVAIDIAPVDYHVRRHDEIFAAINAVSESDAQTRQQAAAIMRQHLNEEGVIQFLLKSFVDGEWRFNVPVLWDQYPHIVGWEKIPAWDHPALFIPGGNSPYVSEQYRDDLLAQFPQARAHVIAGAGHWVHAEKPDAVLRAIRRYLND.

Active-site residues include Ser-89 and His-234.

The protein belongs to the DmpD/TodF/XylF esterase family.

Its function is as follows. Displays esterase activity toward palmitoyl-CoA, malonyl-CoA and pNP-butyrate. This chain is Esterase YbfF (ybfF), found in Escherichia coli (strain K12).